Consider the following 162-residue polypeptide: Glycine cleavage system H protein, mitochondrial (162 aa).

A mitochondrion-targeting transit peptide spans 1–31 (MALRMWASSTANALRLSSATRPHFSPLSRCF). A Lipoyl-binding domain is found at 53 to 135 (VATIGITDHA…YEDGWMIKVK (83 aa)). Lys94 carries the post-translational modification N6-lipoyllysine.

It belongs to the GcvH family. The glycine cleavage system is composed of four proteins: P, T, L and H. It depends on (R)-lipoate as a cofactor.

Its subcellular location is the mitochondrion. The glycine cleavage system catalyzes the degradation of glycine. The H protein shuttles the methylamine group of glycine from the P protein to the T protein. The chain is Glycine cleavage system H protein, mitochondrial (GDCSH) from Flaveria anomala (Yellowtops).